Here is a 106-residue protein sequence, read N- to C-terminus: UPF0060 membrane protein Oant_2511 (106 aa).

Helical transmembrane passes span 3 to 23 (FAIY…FWAW), 30 to 50 (PLWL…LTLI), 60 to 80 (AAYG…AEGA), and 84 to 104 (RWDV…LFAP).

It belongs to the UPF0060 family.

It localises to the cell inner membrane. This Brucella anthropi (strain ATCC 49188 / DSM 6882 / CCUG 24695 / JCM 21032 / LMG 3331 / NBRC 15819 / NCTC 12168 / Alc 37) (Ochrobactrum anthropi) protein is UPF0060 membrane protein Oant_2511.